The primary structure comprises 328 residues: Reticulocalbin-3 (328 aa).

The N-terminal stretch at 1 to 20 (MMWRPSVLLLLLLLRHGAQG) is a signal peptide. Residues 19–49 (QGKPSPDAGPHGQGRVHQAAPLSDAPHDDAH) are disordered. EF-hand domains are found at residues 75–112 (ESQA…TQQR), 113–148 (HIRD…HYAP), 163–198 (KMLA…EEFP), 200–235 (MRDI…AEPG), 241–276 (WVQT…PAQD), and 277–312 (QPLV…FVGS). Residues Asp-92, Asp-94, Trp-96, Glu-101, Asp-126, Asp-128, Asp-130, Arg-132, and Glu-137 each coordinate Ca(2+). Residue Asn-140 is glycosylated (N-linked (GlcNAc...) asparagine). Residues Asp-176, Asp-178, Asp-180, Met-182, Glu-187, Asp-213, Asn-215, Asp-217, Tyr-219, Glu-224, Asp-254, Asn-256, Asp-258, His-260, Glu-265, Asp-290, Asp-292, Asp-294, Arg-296, and Glu-301 each contribute to the Ca(2+) site. Residues 325–328 (HDEL) carry the Prevents secretion from ER motif.

Belongs to the CREC family. As to quaternary structure, interacts with PCSK6 (immature form including the propeptide); probably involved in the maturation and the secretion of PCSK6. In terms of processing, degraded by PCSK6 and other endoproteases including FURIN and PCSK5. Post-translationally, N-glycosylated. In terms of tissue distribution, widely expressed.

It localises to the endoplasmic reticulum lumen. Its function is as follows. Probable molecular chaperone assisting protein biosynthesis and transport in the endoplasmic reticulum. Required for the proper biosynthesis and transport of pulmonary surfactant-associated protein A/SP-A, pulmonary surfactant-associated protein D/SP-D and the lipid transporter ABCA3. By regulating both the proper expression and the degradation through the endoplasmic reticulum-associated protein degradation pathway of these proteins plays a crucial role in pulmonary surfactant homeostasis. Has an anti-fibrotic activity by negatively regulating the secretion of type I and type III collagens. This calcium-binding protein also transiently associates with immature PCSK6 and regulates its secretion. The sequence is that of Reticulocalbin-3 from Homo sapiens (Human).